The sequence spans 69 residues: Large ribosomal subunit protein bL31 (69 aa).

Residues cysteine 16, cysteine 18, cysteine 38, and cysteine 41 each contribute to the Zn(2+) site.

This sequence belongs to the bacterial ribosomal protein bL31 family. Type A subfamily. Part of the 50S ribosomal subunit. It depends on Zn(2+) as a cofactor.

Functionally, binds the 23S rRNA. This is Large ribosomal subunit protein bL31 from Cutibacterium acnes (strain DSM 16379 / KPA171202) (Propionibacterium acnes).